The following is a 516-amino-acid chain: DNA-(apurinic or apyrimidinic site) endonuclease 2 (516 aa).

Residues asparagine 8 and glutamate 47 each contribute to the Mg(2+) site. Residue tyrosine 155 is part of the active site. Mg(2+)-binding residues include aspartate 196, asparagine 198, aspartate 302, and histidine 303. Aspartate 196 acts as the Proton donor/acceptor in catalysis. Histidine 303 (proton acceptor) is an active-site residue. The span at 357–366 shows a compositional bias: polar residues; that stretch reads QPSHQIQAQR. Residues 357–389 form a disordered region; sequence QPSHQIQAQRQPRKACMHSTRLRKSQGGPKRKQ. The span at 367 to 389 shows a compositional bias: basic residues; that stretch reads QPRKACMHSTRLRKSQGGPKRKQ. Residue lysine 370 forms a Glycyl lysine isopeptide (Lys-Gly) (interchain with G-Cter in ubiquitin) linkage. The segment at 389–396 is required for the interaction and colocalization with PCNA in nuclear foci in presence of oxidative-induced DNA damaging agents; sequence QKNLMSYF. Residues cysteine 467, histidine 470, cysteine 493, and cysteine 507 each contribute to the Zn(2+) site. A GRF-type zinc finger spans residues 467–516; sequence CGGHREPCVMRTVKKTGPNFGRQFYMCARPRGPPSDPSSRCNFFLWSRPS.

Belongs to the DNA repair enzymes AP/ExoA family. Interacts with PCNA. This interaction is increased by misincorporation of uracil in nuclear DNA. Mg(2+) is required as a cofactor. Mn(2+) serves as cofactor. In terms of processing, ubiquitinated by the CUL9-RBX1 complex. Ubiquitinated by MKRN3 at Lys-370 leading to proteasomal degradation. Expressed in lymphocytes, thymocytes and splenocytes (at protein level). Highly expressed in the thymus and weakly expressed in the bone marrow, spleen, eye, kidney, lung, brain and uterus.

It localises to the nucleus. It is found in the cytoplasm. The protein localises to the mitochondrion. It catalyses the reaction Exonucleolytic cleavage in the 3'- to 5'-direction to yield nucleoside 5'-phosphates.. Its activity is regulated as follows. 3'-5' exonuclease activity is activated by sodium and manganese. 3'-5' exonuclease and 3'-phosphodiesterase activities are stimulated in presence of PCNA. Functions as a weak apurinic/apyrimidinic (AP) endodeoxyribonuclease in the DNA base excision repair (BER) pathway of DNA lesions induced by oxidative and alkylating agents. Initiates repair of AP sites in DNA by catalyzing hydrolytic incision of the phosphodiester backbone immediately adjacent to the damage, generating a single-strand break with 5'-deoxyribose phosphate and 3'-hydroxyl ends. Also displays double-stranded DNA 3'-5' exonuclease, 3'-phosphodiesterase activities. Shows robust 3'-5' exonuclease activity on 3'-recessed heteroduplex DNA and is able to remove mismatched nucleotides preferentially. Shows fairly strong 3'-phosphodiesterase activity involved in the removal of 3'-damaged termini formed in DNA by oxidative agents. In the nucleus functions in the PCNA-dependent BER pathway. Plays a role in reversing blocked 3' DNA ends, problematic lesions that preclude DNA synthesis. Required for somatic hypermutation (SHM) and DNA cleavage step of class switch recombination (CSR) of immunoglobulin genes. Required for proper cell cycle progression during proliferation of peripheral lymphocytes. This chain is DNA-(apurinic or apyrimidinic site) endonuclease 2 (Apex2), found in Mus musculus (Mouse).